The following is a 367-amino-acid chain: Peptide chain release factor 2 (367 aa).

Gln-254 is subject to N5-methylglutamine.

Belongs to the prokaryotic/mitochondrial release factor family. Post-translationally, methylated by PrmC. Methylation increases the termination efficiency of RF2.

The protein localises to the cytoplasm. Functionally, peptide chain release factor 2 directs the termination of translation in response to the peptide chain termination codons UGA and UAA. The sequence is that of Peptide chain release factor 2 from Burkholderia cenocepacia (strain ATCC BAA-245 / DSM 16553 / LMG 16656 / NCTC 13227 / J2315 / CF5610) (Burkholderia cepacia (strain J2315)).